Consider the following 71-residue polypeptide: uncharacterized protein (71 aa).

This is an uncharacterized protein from Lepidoptera (butterflies and moths).